The sequence spans 225 residues: MNSIKFPVLDRTTKNSVISTTLNDLSNWTRLSSLWPLLYGTSCCFIEFASLIGSRFDFDRYGLVPRSSPRQADLILTAGTVTMKMAPSLVRLYEQMPEPKYVIAMGACTITGGMFSTDSYSTVRGVDKLIPVDVYLPGCPPKPEAVIDAITKLRKKIAREIYKDRIRPQQGNRCFTTNHKFFIVRSPHTGNYDQELLYPPSSTSEISTETFFKYKSPVSSHELVN.

4 residues coordinate [4Fe-4S] cluster: cysteine 43, cysteine 44, cysteine 108, and cysteine 139.

The protein belongs to the complex I 20 kDa subunit family. In terms of assembly, NDH is composed of at least 16 different subunits, 5 of which are encoded in the nucleus. It depends on [4Fe-4S] cluster as a cofactor.

Its subcellular location is the plastid. It is found in the chloroplast thylakoid membrane. The catalysed reaction is a plastoquinone + NADH + (n+1) H(+)(in) = a plastoquinol + NAD(+) + n H(+)(out). The enzyme catalyses a plastoquinone + NADPH + (n+1) H(+)(in) = a plastoquinol + NADP(+) + n H(+)(out). In terms of biological role, NDH shuttles electrons from NAD(P)H:plastoquinone, via FMN and iron-sulfur (Fe-S) centers, to quinones in the photosynthetic chain and possibly in a chloroplast respiratory chain. The immediate electron acceptor for the enzyme in this species is believed to be plastoquinone. Couples the redox reaction to proton translocation, and thus conserves the redox energy in a proton gradient. The chain is NAD(P)H-quinone oxidoreductase subunit K, chloroplastic from Capsella bursa-pastoris (Shepherd's purse).